We begin with the raw amino-acid sequence, 425 residues long: Glutamate-1-semialdehyde 2,1-aminomutase (425 aa).

Lysine 265 is modified (N6-(pyridoxal phosphate)lysine).

This sequence belongs to the class-III pyridoxal-phosphate-dependent aminotransferase family. HemL subfamily. As to quaternary structure, homodimer. Pyridoxal 5'-phosphate serves as cofactor.

Its subcellular location is the cytoplasm. It carries out the reaction (S)-4-amino-5-oxopentanoate = 5-aminolevulinate. Its pathway is porphyrin-containing compound metabolism; protoporphyrin-IX biosynthesis; 5-aminolevulinate from L-glutamyl-tRNA(Glu): step 2/2. The protein is Glutamate-1-semialdehyde 2,1-aminomutase of Clostridium perfringens (strain SM101 / Type A).